Here is a 900-residue protein sequence, read N- to C-terminus: DNA polymerase nu (900 aa).

Residues 60–75 (LEDRKTQSPEKKDLKS) are compositionally biased toward basic and acidic residues. Disordered regions lie at residues 60–90 (LEDR…LSPQ) and 863–900 (GPPP…SFCL). The span at 76 to 90 (LRSQTSRGSAKLSPQ) shows a compositional bias: polar residues.

This sequence belongs to the DNA polymerase type-A family. Interacts with FANCD2, FANCI, PCNA, RAD51 and HELQ. In terms of tissue distribution, highly expressed in testis and heart. Weakly expressed in skeletal muscle.

It localises to the nucleus. The catalysed reaction is DNA(n) + a 2'-deoxyribonucleoside 5'-triphosphate = DNA(n+1) + diphosphate. Inhibited by ddTTP. Functionally, DNA polymerase with very low fidelity that catalyzes considerable misincorporation by inserting dTTP opposite a G template, and dGTP opposite a T template. Is the least accurate of the DNA polymerase A family (i.e. POLG, POLN and POLQ). Can perform accurate translesion DNA synthesis (TLS) past a 5S-thymine glycol. Can perform efficient strand displacement past a nick or a gap and gives rise to an amount of product similar to that on non-damaged template. Has no exonuclease activity. Error-prone DNA polymerase that preferentially misincorporates dT regardless of template sequence. May play a role in TLS during interstrand cross-link (ICL) repair. May be involved in TLS when genomic replication is blocked by extremely large major groove DNA lesions. May function in the bypass of some DNA-protein and DNA-DNA cross-links. May have a role in cellular tolerance to DNA cross-linking agents. Involved in the repair of DNA cross-links and double-strand break (DSB) resistance. Participates in FANCD2-mediated repair. Forms a complex with HELQ helicase that participates in homologous recombination (HR) repair and is essential for cellular protection against DNA cross-links. This chain is DNA polymerase nu (POLN), found in Homo sapiens (Human).